We begin with the raw amino-acid sequence, 347 residues long: NADH-ubiquinone oxidoreductase chain 2 (347 aa).

Transmembrane regions (helical) follow at residues 3-23 (PLIF…VMTT), 25-45 (HWVM…PILM), 59-79 (YFLT…INLT), 96-116 (IIMT…FWVP), 122-142 (VQLS…MSIL), 149-169 (INLD…GWGG), 178-198 (ILAY…VYNP), 201-221 (ALLN…MLMV), 237-257 (MPLL…LPPL), 274-294 (DSMI…YFYM), and 326-346 (LSPL…LALL).

The protein belongs to the complex I subunit 2 family. Core subunit of respiratory chain NADH dehydrogenase (Complex I) which is composed of 45 different subunits. Interacts with TMEM242.

The protein localises to the mitochondrion inner membrane. The catalysed reaction is a ubiquinone + NADH + 5 H(+)(in) = a ubiquinol + NAD(+) + 4 H(+)(out). Functionally, core subunit of the mitochondrial membrane respiratory chain NADH dehydrogenase (Complex I) which catalyzes electron transfer from NADH through the respiratory chain, using ubiquinone as an electron acceptor. Essential for the catalytic activity and assembly of complex I. This is NADH-ubiquinone oxidoreductase chain 2 from Nyctimene aello (Broad-striped tube-nosed fruit bat).